Consider the following 412-residue polypeptide: Lysosomal phospholipase A and acyltransferase (412 aa).

A signal peptide spans 1–33 (MDRHLCTCRETQLRSGLLLPLFLLMMLADLTLP). Substrate is bound at residue Asp46. An intrachain disulfide couples Cys65 to Cys89. An N-linked (GlcNAc...) asparagine glycan is attached at Asn99. Residue Ser198 is the Acyl-ester intermediate of the active site. Residue Ser198 participates in Zn(2+) binding. Met199 contributes to the substrate binding site. N-linked (GlcNAc...) asparagine glycosylation is found at Asn273 and Asn289. Residue Cys355 coordinates Zn(2+). Catalysis depends on charge relay system residues Asp360 and His392. His392 serves as a coordination point for Zn(2+). Asn398 carries an N-linked (GlcNAc...) asparagine glycan.

It belongs to the AB hydrolase superfamily. Lipase family. Post-translationally, N-glycosylated. N-glycosylation is important for maturation of the enzyme and normal subcellular location. In terms of tissue distribution, detected in blood plasma. Detected in alveolar macrophages (at protein level). Detected in heart, liver, spleen, kidney, thymus, brain and lung.

The protein localises to the secreted. The protein resides in the lysosome. It localises to the membrane. It carries out the reaction a 1,2-diacyl-sn-glycero-3-phosphocholine + H2O = a 2-acyl-sn-glycero-3-phosphocholine + a fatty acid + H(+). The enzyme catalyses 1-hexadecanoyl-2-(9Z-octadecenoyl)-sn-glycero-3-phosphocholine + H2O = 2-(9Z-octadecenoyl)-sn-glycero-3-phosphocholine + hexadecanoate + H(+). It catalyses the reaction 1,2-di-(9Z-octadecenoyl)-sn-glycero-3-phosphocholine + H2O = 2-(9Z-octadecenoyl)-sn-glycero-3-phosphocholine + (9Z)-octadecenoate + H(+). The catalysed reaction is 1-hexadecanoyl-2-glutaroyl-sn-glycero-3-phosphocholine + H2O = 2-glutaroyl-sn-glycero-3-phosphocholine + hexadecanoate + H(+). It carries out the reaction 1-hexadecanoyl-2-nonadioyl-sn-glycero-3-phosphocholine + H2O = 2-nonadioyl-sn-glycero-3-phosphocholine + hexadecanoate + H(+). The enzyme catalyses 1-hexadecanoyl-2-(5-oxopentanoyl)-sn-glycero-3-phosphocholine + H2O = 2-(5-oxopentanoyl)-sn-glycero-3-phosphocholine + hexadecanoate + H(+). It catalyses the reaction 1-hexadecanoyl-2-(9-oxononanoyl)-sn-glycero-3-phosphocholine + H2O = 2-(9-oxononanoyl)-sn-glycero-3-phosphocholine + hexadecanoate + H(+). The catalysed reaction is 1,2-dihexadecanoyl-sn-glycero-3-phosphocholine + H2O = 2-hexadecanoyl-sn-glycero-3-phosphocholine + hexadecanoate + H(+). It carries out the reaction a 1,2-diacyl-sn-glycero-3-phosphocholine + H2O = a 1-acyl-sn-glycero-3-phosphocholine + a fatty acid + H(+). The enzyme catalyses 1-hexadecanoyl-2-(9Z-octadecenoyl)-sn-glycero-3-phosphocholine + H2O = 1-hexadecanoyl-sn-glycero-3-phosphocholine + (9Z)-octadecenoate + H(+). It catalyses the reaction 1,2-di-(9Z-octadecenoyl)-sn-glycero-3-phosphocholine + H2O = 1-(9Z-octadecenoyl)-sn-glycero-3-phosphocholine + (9Z)-octadecenoate + H(+). The catalysed reaction is 1,2-dihexadecanoyl-sn-glycero-3-phosphocholine + H2O = 1-hexadecanoyl-sn-glycero-3-phosphocholine + hexadecanoate + H(+). It carries out the reaction a 1-acyl-sn-glycero-3-phosphocholine + H2O = sn-glycerol 3-phosphocholine + a fatty acid + H(+). The enzyme catalyses 1-hexadecanoyl-sn-glycero-3-phosphocholine + H2O = sn-glycerol 3-phosphocholine + hexadecanoate + H(+). It catalyses the reaction N-(acetyl)-sphing-4-enine + a 1,2-diacyl-sn-glycero-3-phosphoethanolamine = 1-O-acyl-N-(acetyl)-sphing-4-enine + a 2-acyl-sn-glycero-3-phosphoethanolamine. The catalysed reaction is 1-hexadecanoyl-2-(9Z-octadecenoyl)-sn-glycero-3-phosphoethanolamine + N-(acetyl)-sphing-4-enine = 2-(9Z-octadecenoyl)-sn-glycero-3-phosphoethanolamine + 1-hexadecanoyl-N-(acetyl)-sphing-4-enine. It carries out the reaction 1-hexadecanoyl-2-(9Z,12Z-octadecadienoyl)-sn-glycero-3-phosphoethanolamine + N-(acetyl)-sphing-4-enine = 2-(9Z,12Z)-octadecadienoyl-sn-glycero-3-phosphoethanolamine + 1-hexadecanoyl-N-(acetyl)-sphing-4-enine. The enzyme catalyses 1-hexadecanoyl-2-(5Z,8Z,11Z,14Z-eicosatetraenoyl)-sn-glycero-3-phosphoethanolamine + N-(acetyl)-sphing-4-enine = 2-(5Z,8Z,11Z,14Z)-eicosatetraenoyl-sn-glycero-3-phosphoethanolamine + 1-hexadecanoyl-N-(acetyl)-sphing-4-enine. It catalyses the reaction N-(acetyl)-sphing-4-enine + a 1,2-diacyl-sn-glycero-3-phosphoethanolamine = 1-O-acyl-N-(acetyl)-sphing-4-enine + a 1-acyl-sn-glycero-3-phosphoethanolamine. The catalysed reaction is 1-hexadecanoyl-2-(9Z-octadecenoyl)-sn-glycero-3-phosphoethanolamine + N-(acetyl)-sphing-4-enine = 1-(9Z-octadecenoyl)-N-(acetyl)-sphing-4-enine + 1-hexadecanoyl-sn-glycero-3-phosphoethanolamine. It carries out the reaction 1-hexadecanoyl-2-(9Z,12Z-octadecadienoyl)-sn-glycero-3-phosphoethanolamine + N-(acetyl)-sphing-4-enine = 1-(9Z,12Z-octadecadienoyl)-N-acetylsphing-4-enine + 1-hexadecanoyl-sn-glycero-3-phosphoethanolamine. The enzyme catalyses 1-hexadecanoyl-2-(5Z,8Z,11Z,14Z-eicosatetraenoyl)-sn-glycero-3-phosphoethanolamine + N-(acetyl)-sphing-4-enine = 1-(5Z,8Z,11Z,14Z)-eicosatetraenoyl-N-(acetyl)-sphing-4-enine + 1-hexadecanoyl-sn-glycero-3-phosphoethanolamine. It catalyses the reaction N-(acetyl)-sphing-4-enine + a 1,2-diacyl-sn-glycero-3-phosphocholine = 1-O-acyl-N-(acetyl)-sphing-4-enine + a 2-acyl-sn-glycero-3-phosphocholine. The catalysed reaction is 1-hexadecanoyl-2-(9Z-octadecenoyl)-sn-glycero-3-phosphocholine + N-(acetyl)-sphing-4-enine = 1-hexadecanoyl-N-(acetyl)-sphing-4-enine + 2-(9Z-octadecenoyl)-sn-glycero-3-phosphocholine. It carries out the reaction 1-hexadecanoyl-2-(9Z,12Z-octadecadienoyl)-sn-glycero-3-phosphocholine + N-(acetyl)-sphing-4-enine = 2-(9Z,12Z-octadecadienoyl)-sn-glycero-3-phosphocholine + 1-hexadecanoyl-N-(acetyl)-sphing-4-enine. The enzyme catalyses 1-hexadecanoyl-2-(5Z,8Z,11Z,14Z-eicosatetraenoyl)-sn-glycero-3-phosphocholine + N-(acetyl)-sphing-4-enine = 1-hexadecanoyl-N-(acetyl)-sphing-4-enine + 2-(5Z,8Z,11Z,14Z)-eicosatetraenoyl-sn-glycero-3-phosphocholine. It catalyses the reaction 1-hexadecanoyl-2-(4Z,7Z,10Z,13Z,16Z,19Z-docosahexaenoyl)-sn-glycero-3-phosphocholine + N-(acetyl)-sphing-4-enine = 2-(4Z,7Z,10Z,13Z,16Z,19Z-docosahexaenoyl)-sn-glycero-3-phosphocholine + 1-hexadecanoyl-N-(acetyl)-sphing-4-enine. The catalysed reaction is 1-hexadecanoyl-2-nonadioyl-sn-glycero-3-phosphocholine + N-(acetyl)-sphing-4-enine = 2-nonadioyl-sn-glycero-3-phosphocholine + 1-hexadecanoyl-N-(acetyl)-sphing-4-enine. It carries out the reaction 1-octadecanoyl-2-(9Z-octadecenoyl)-sn-glycero-3-phosphocholine + N-(acetyl)-sphing-4-enine = 1-octadecanoyl-N-(acetyl)-sphing-4-enine + 2-(9Z-octadecenoyl)-sn-glycero-3-phosphocholine. The enzyme catalyses 1-(9Z)-octadecenoyl-2-octadecanoyl-sn-glycero-3-phosphocholine + N-(acetyl)-sphing-4-enine = 2-octadecanoyl-sn-glycero-3-phosphocholine + 1-(9Z-octadecenoyl)-N-(acetyl)-sphing-4-enine. It catalyses the reaction 1-octadecanoyl-2-(5Z,8Z,11Z,14Z-eicosatetraenoyl)-sn-glycero-3-phosphocholine + N-(acetyl)-sphing-4-enine = 1-octadecanoyl-N-(acetyl)-sphing-4-enine + 2-(5Z,8Z,11Z,14Z)-eicosatetraenoyl-sn-glycero-3-phosphocholine. The catalysed reaction is 1-(9Z-octadecenoyl)-2-hexadecanoyl-sn-glycero-3-phosphocholine + N-(acetyl)-sphing-4-enine = 1-(9Z-octadecenoyl)-N-(acetyl)-sphing-4-enine + 2-hexadecanoyl-sn-glycero-3-phosphocholine. It carries out the reaction N-(acetyl)-sphing-4-enine + a 1,2-diacyl-sn-glycero-3-phosphocholine = 1-O-acyl-N-(acetyl)-sphing-4-enine + a 1-acyl-sn-glycero-3-phosphocholine. The enzyme catalyses 1-hexadecanoyl-2-(9Z-octadecenoyl)-sn-glycero-3-phosphocholine + N-(acetyl)-sphing-4-enine = 1-(9Z-octadecenoyl)-N-(acetyl)-sphing-4-enine + 1-hexadecanoyl-sn-glycero-3-phosphocholine. It catalyses the reaction 1-hexadecanoyl-2-(9Z,12Z-octadecadienoyl)-sn-glycero-3-phosphocholine + N-(acetyl)-sphing-4-enine = 1-(9Z,12Z-octadecadienoyl)-N-acetylsphing-4-enine + 1-hexadecanoyl-sn-glycero-3-phosphocholine. The catalysed reaction is 1-hexadecanoyl-2-(5Z,8Z,11Z,14Z-eicosatetraenoyl)-sn-glycero-3-phosphocholine + N-(acetyl)-sphing-4-enine = 1-(5Z,8Z,11Z,14Z)-eicosatetraenoyl-N-(acetyl)-sphing-4-enine + 1-hexadecanoyl-sn-glycero-3-phosphocholine. It carries out the reaction 1-hexadecanoyl-2-(4Z,7Z,10Z,13Z,16Z,19Z-docosahexaenoyl)-sn-glycero-3-phosphocholine + N-(acetyl)-sphing-4-enine = 1-(4Z,7Z,10Z,13Z,16Z,19Z-docosahexaenoyl)-N-(acetyl)-sphing-4-enine + 1-hexadecanoyl-sn-glycero-3-phosphocholine. The enzyme catalyses 1-octadecanoyl-2-(9Z-octadecenoyl)-sn-glycero-3-phosphocholine + N-(acetyl)-sphing-4-enine = 1-(9Z-octadecenoyl)-N-(acetyl)-sphing-4-enine + 1-octadecanoyl-sn-glycero-3-phosphocholine. It catalyses the reaction 1-octadecanoyl-2-(9Z,12Z)-octadecadienoyl-sn-glycero-3-phosphocholine + N-(acetyl)-sphing-4-enine = 1-(9Z,12Z-octadecadienoyl)-N-acetylsphing-4-enine + 1-octadecanoyl-sn-glycero-3-phosphocholine. The catalysed reaction is 1-(9Z-octadecenoyl)-2-hexadecanoyl-sn-glycero-3-phosphocholine + N-(acetyl)-sphing-4-enine = 1-hexadecanoyl-N-(acetyl)-sphing-4-enine + 1-(9Z-octadecenoyl)-sn-glycero-3-phosphocholine. It carries out the reaction 1-(9Z)-octadecenoyl-2-octadecanoyl-sn-glycero-3-phosphocholine + N-(acetyl)-sphing-4-enine = 1-octadecanoyl-N-(acetyl)-sphing-4-enine + 1-(9Z-octadecenoyl)-sn-glycero-3-phosphocholine. The enzyme catalyses 1,2-di-(9Z-octadecenoyl)-sn-glycero-3-phosphocholine + N-(acetyl)-sphing-4-enine = 1-(9Z-octadecenoyl)-N-(acetyl)-sphing-4-enine + 1-(9Z-octadecenoyl)-sn-glycero-3-phosphocholine. It catalyses the reaction 1-octadecanoyl-2-(5Z,8Z,11Z,14Z-eicosatetraenoyl)-sn-glycero-3-phosphocholine + N-(acetyl)-sphing-4-enine = 1-(5Z,8Z,11Z,14Z)-eicosatetraenoyl-N-(acetyl)-sphing-4-enine + 1-octadecanoyl-sn-glycero-3-phosphocholine. The catalysed reaction is a 1,2-diacyl-sn-glycero-3-phospho-L-serine + N-(acetyl)-sphing-4-enine = a 2-acyl-sn-glycero-3-phospho-L-serine + 1-O-acyl-N-(acetyl)-sphing-4-enine. It carries out the reaction 1-octadecanoyl-2-(9Z-octadecenoyl)-sn-glycero-3-phospho-L-serine + N-(acetyl)-sphing-4-enine = 2-(9Z-octadecenoyl)-sn-glycero-3-phospho-L-serine + 1-octadecanoyl-N-(acetyl)-sphing-4-enine. The enzyme catalyses a 1,2-diacyl-sn-glycero-3-phospho-L-serine + N-(acetyl)-sphing-4-enine = 1-O-acyl-N-(acetyl)-sphing-4-enine + a 1-acyl-sn-glycero-3-phospho-L-serine. It catalyses the reaction 1-octadecanoyl-2-(9Z-octadecenoyl)-sn-glycero-3-phospho-L-serine + N-(acetyl)-sphing-4-enine = 1-octadecanoyl-sn-glycero-3-phosphoserine + 1-(9Z-octadecenoyl)-N-(acetyl)-sphing-4-enine. The catalysed reaction is a 1,2-diacyl-sn-glycero-3-phospho-(1'-sn-glycerol) + N-(acetyl)-sphing-4-enine = 2-acyl-sn-glycero-3-phospho-(1'-sn-glycerol) + 1-O-acyl-N-(acetyl)-sphing-4-enine. It carries out the reaction 1-octadecanoyl-2-(9Z-octadecenoyl)-sn-glycero-3-phospho-(1'-sn-glycerol) + N-(acetyl)-sphing-4-enine = 2-(9Z-octadecenoyl)-sn-glycero-3-phospho-(1'-sn-glycerol) + 1-octadecanoyl-N-(acetyl)-sphing-4-enine. The enzyme catalyses a 1,2-diacyl-sn-glycero-3-phospho-(1'-sn-glycerol) + N-(acetyl)-sphing-4-enine = 1-O-acyl-N-(acetyl)-sphing-4-enine + 1-acyl-sn-glycero-3-phospho-(1'-sn-glycerol). It catalyses the reaction 1-octadecanoyl-2-(9Z-octadecenoyl)-sn-glycero-3-phospho-(1'-sn-glycerol) + N-(acetyl)-sphing-4-enine = 1-octadecanoyl-sn-glycero-3-phospho-(1'-sn-glycerol) + 1-(9Z-octadecenoyl)-N-(acetyl)-sphing-4-enine. The catalysed reaction is an N-acylethanolamine + a 1,2-diacyl-sn-glycero-3-phosphocholine = 2-(acylamino)ethyl fatty acid + a 2-acyl-sn-glycero-3-phosphocholine. It carries out the reaction an N-acylethanolamine + a 1,2-diacyl-sn-glycero-3-phosphocholine = 2-(acylamino)ethyl fatty acid + a 1-acyl-sn-glycero-3-phosphocholine. The enzyme catalyses N-(5Z,8Z,11Z,14Z-eicosatetraenoyl)-ethanolamine + 1,2-di-(9Z-octadecenoyl)-sn-glycero-3-phosphocholine = 2-[(5Z,8Z,11Z,14Z)-eicosatetraenoylamino]ethyl (9Z)-octadecenoate + (9Z-octadecenoyl)-sn-glycero-3-phosphocholine. It catalyses the reaction N-(9Z-octadecenoyl) ethanolamine + 1,2-di-(9Z-octadecenoyl)-sn-glycero-3-phosphocholine = 2-[(9Z)-octadecenoylamino]ethyl (9Z)-octadecenoate + (9Z-octadecenoyl)-sn-glycero-3-phosphocholine. The catalysed reaction is a 3-acyl-sn-glycerol + a 1,2-diacyl-sn-glycero-3-phosphocholine = a 1,3-diacylglycerol + a 1-acyl-sn-glycero-3-phosphocholine. It carries out the reaction a 3-acyl-sn-glycerol + a 1,2-diacyl-sn-glycero-3-phosphocholine = a 1,3-diacylglycerol + a 2-acyl-sn-glycero-3-phosphocholine. The enzyme catalyses 3-(9Z-octadecenoyl)-sn-glycerol + 1,2-di-(9Z-octadecenoyl)-sn-glycero-3-phosphocholine = 1,3-di-(9Z-octadecenoyl)-glycerol + (9Z-octadecenoyl)-sn-glycero-3-phosphocholine. It catalyses the reaction 3-hexadecanoyl-sn-glycerol + 1,2-di-(9Z-octadecenoyl)-sn-glycero-3-phosphocholine = 1-(9Z)-octadecenoyl-3-hexadecanoyl-sn-glycerol + (9Z-octadecenoyl)-sn-glycero-3-phosphocholine. The catalysed reaction is a 1-acyl-sn-glycerol + a 1,2-diacyl-sn-glycero-3-phosphocholine = a 1,3-diacylglycerol + a 2-acyl-sn-glycero-3-phosphocholine. It carries out the reaction a 1-acyl-sn-glycerol + a 1,2-diacyl-sn-glycero-3-phosphocholine = a 1,3-diacylglycerol + a 1-acyl-sn-glycero-3-phosphocholine. The enzyme catalyses 1-(9Z-octadecenoyl)-sn-glycerol + 1,2-di-(9Z-octadecenoyl)-sn-glycero-3-phosphocholine = 1,3-di-(9Z-octadecenoyl)-glycerol + (9Z-octadecenoyl)-sn-glycero-3-phosphocholine. It catalyses the reaction 1-hexadecanoyl-sn-glycerol + 1,2-di-(9Z-octadecenoyl)-sn-glycero-3-phosphocholine = 1-hexadecanoyl-3-(9Z)-octadecenoyl-sn-glycerol + (9Z-octadecenoyl)-sn-glycero-3-phosphocholine. The catalysed reaction is a 2-acylglycerol + a 1,2-diacyl-sn-glycero-3-phosphocholine = a 1,2-diacylglycerol + a 2-acyl-sn-glycero-3-phosphocholine. It carries out the reaction a 2-acylglycerol + a 1,2-diacyl-sn-glycero-3-phosphocholine = a 1,2-diacylglycerol + a 1-acyl-sn-glycero-3-phosphocholine. The enzyme catalyses 2-hexadecanoylglycerol + 1,2-di-(9Z-octadecenoyl)-sn-glycero-3-phosphocholine = 1-(9Z)-octadecenoyl-2-hexadecanoylglycerol + (9Z-octadecenoyl)-sn-glycero-3-phosphocholine. It catalyses the reaction 1-O-alkylglycerol + a 1,2-diacyl-sn-glycero-3-phosphocholine = 1-O-alkyl-3-acylglycerol + a 1-acyl-sn-glycero-3-phosphocholine. The catalysed reaction is 1-O-alkylglycerol + a 1,2-diacyl-sn-glycero-3-phosphocholine = 1-O-alkyl-3-acylglycerol + a 2-acyl-sn-glycero-3-phosphocholine. It carries out the reaction 1-O-hexadecylglycerol + 1,2-di-(9Z-octadecenoyl)-sn-glycero-3-phosphocholine = 1-O-hexadecyl-3-(9Z)-octadecenoylglycerol + (9Z-octadecenoyl)-sn-glycero-3-phosphocholine. The enzyme catalyses 1-O-alkyl-2-acyl-sn-glycerol + a 1,2-diacyl-sn-glycero-3-phosphocholine = 1-O-alkyl-2,3-diacyl-sn-glycerol + a 2-acyl-sn-glycero-3-phosphocholine. It catalyses the reaction 1-O-alkyl-2-acyl-sn-glycerol + a 1,2-diacyl-sn-glycero-3-phosphocholine = 1-O-alkyl-2,3-diacyl-sn-glycerol + a 1-acyl-sn-glycero-3-phosphocholine. The catalysed reaction is 1-O-hexadecyl-2-acetyl-sn-glycerol + 1,2-di-(9Z-octadecenoyl)-sn-glycero-3-phosphocholine = 1-O-hexadecyl-2-acetyl-3-(9Z)-octadecenoyl-sn-glycerol + (9Z-octadecenoyl)-sn-glycero-3-phosphocholine. It carries out the reaction 1-O-hexadecyl-2-O-methyl-sn-glycerol + 1,2-di-(9Z-octadecenoyl)-sn-glycero-3-phosphocholine = 1-O-hexadecyl-2-O-methyl-3-(9Z)-octadecenoyl-sn-glycerol + (9Z-octadecenoyl)-sn-glycero-3-phosphocholine. The enzyme catalyses a 1,2-diacyl-sn-glycero-3-phosphoethanolamine + H2O = a 1-acyl-sn-glycero-3-phosphoethanolamine + a fatty acid + H(+). It catalyses the reaction 1-acyl-2-(5Z,8Z,11Z,14Z)-eicosatetraenoyl-sn-glycero-3-phosphoethanolamine + H2O = a 1-acyl-sn-glycero-3-phosphoethanolamine + (5Z,8Z,11Z,14Z)-eicosatetraenoate + H(+). The catalysed reaction is a 1,2-diacyl-sn-glycero-3-phospho-(1'-sn-glycerol) + H2O = 1-acyl-sn-glycero-3-phospho-(1'-sn-glycerol) + a fatty acid + H(+). It carries out the reaction 1-hexadecanoyl-2-(9Z-octadecenoyl)-sn-glycero-3-phospho-(1'-sn-glycerol) + H2O = 1-hexadecanoyl-sn-glycero-3-phospho-(1'-sn-glycerol) + (9Z)-octadecenoate + H(+). The enzyme catalyses a 1,2-diacyl-sn-glycero-3-phospho-(1'-sn-glycerol) + H2O = 2-acyl-sn-glycero-3-phospho-(1'-sn-glycerol) + a fatty acid + H(+). It catalyses the reaction 1-hexadecanoyl-2-(9Z-octadecenoyl)-sn-glycero-3-phospho-(1'-sn-glycerol) + H2O = 2-(9Z-octadecenoyl)-sn-glycero-3-phospho-(1'-sn-glycerol) + hexadecanoate + H(+). Its activity is regulated as follows. Phospholipase sn-2 versus sn-1 positional specificity is affected by the phospholipid composition of membranes. Phospholipase A2 activity toward 1-hexadecanoyl-2-(5Z,8Z,11Z,14Z-eicosatetraenoyl)-sn-glycero-3-phosphocholine (PAPE) is enhanced in the presence of 1,2-dioleoyl-sn-glycero-3-phosphocholine (DOPC), which promotes lipid bilayer formation. O-acyltransferase activity is inhibited by antiarrhythmic drug amiodarone. Its function is as follows. Has dual calcium-independent phospholipase and O-acyltransferase activities with a potential role in glycerophospholipid homeostasis and remodeling of acyl groups of lipophilic alcohols present in acidic cellular compartments. Catalyzes hydrolysis of the ester bond of the fatty acyl group attached at sn-1 or sn-2 position of phospholipids (phospholipase A1 or A2 activity) and transfer it to the hydroxyl group at the first carbon of lipophilic alcohols (O-acyltransferase activity). Among preferred fatty acyl donors are phosphatidylcholines, phosphatidylethanolamines, phosphatidylglycerols and phosphatidylserines. Favors sn-2 over sn-1 deacylation of unsaturated fatty acyl groups of phosphatidylcholines, phosphatidylethanolamines, and phosphatidylglycerols. Among preferred fatty acyl acceptors are natural lipophilic alcohols including short-chain ceramide N-acetyl-sphingosine (C2 ceramide), alkylacylglycerols, monoacylglycerols, and acylethanolamides such as anandamide and oleoylethanolamide. Selectively hydrolyzes the sn-1 fatty acyl group of truncated oxidized phospholipids and may play a role in detoxification of reactive oxidized phospholipids during oxidative stress. Required for normal phospholipid degradation in alveolar macrophages with potential implications in the clearance of pulmonary surfactant, which is mainly composed of dipalmitoylphosphatidylcholine (1,2-dihexadecanoyl-sn-glycero-3-phosphocholine). Involved in the first step of bis(monoacylglycero)phosphate (BMP) de novo synthesis from phosphatidylglycerol (1,2-diacyl-sn-glycero-3-phospho-(1'-sn-glycerol), PG). BMP is an important player in cargo sorting and degradation, regulation of cellular cholesterol levels and intercellular communication. At neutral pH, hydrolyzes the sn-1 fatty acyl group of the lysophosphatidylcholines. This is Lysosomal phospholipase A and acyltransferase from Mus musculus (Mouse).